The primary structure comprises 430 residues: Palmitoyltransferase ZDHHC11 (430 aa).

Topologically, residues 1–46 are cytoplasmic; that stretch reads MTNLNCFGRHRRRTAPHNATGSRSELVAPPIHSRINGWSSPLHSFQ. The helical transmembrane segment at 47–67 threads the bilayer; sequence FIALLIFSFMAIVAFGIYVPL. Over 68 to 76 the chain is Lumenal; that stretch reads LPAPWSYAA. Residues 77–97 traverse the membrane as a helical segment; sequence YALIGSAFVLHLFSHVTAVTI. At 98–176 the chain is on the cytoplasmic side; sequence DPADVNVRRR…GGRNYWFFFT (79 aa). The DHHC domain occupies 129–179; that stretch reads LHCTLCEVDVSPKAKHCSTCNKCIADFDHHCKWLNNCVGGRNYWFFFTAVS. The active-site S-palmitoyl cysteine intermediate is Cys-159. The helical transmembrane segment at 177 to 197 threads the bilayer; it reads AVSSAVIGVILLIPLVLFVFI. Topologically, residues 198–234 are lumenal; the sequence is EHYVNPAVLRTAPQFQTVKGNGTWLVFLPVAPVETSS. The helical transmembrane segment at 235–255 threads the bilayer; the sequence is ISLLVVSFITALLSLAALLLL. Residues 256–430 are Cytoplasmic-facing; it reads CHLLCFHIYL…QYLHFKQKMP (175 aa).

Belongs to the DHHC palmitoyltransferase family.

Its subcellular location is the endoplasmic reticulum membrane. The enzyme catalyses L-cysteinyl-[protein] + hexadecanoyl-CoA = S-hexadecanoyl-L-cysteinyl-[protein] + CoA. In terms of biological role, endoplasmic reticulum-localized palmitoyltransferase that could catalyze the addition of palmitate onto protein substrates. The protein is Palmitoyltransferase ZDHHC11 of Danio rerio (Zebrafish).